We begin with the raw amino-acid sequence, 82 residues long: Putative ribonuclease VapC34 (82 aa).

Position 4 (Asp4) interacts with Mg(2+).

The protein belongs to the PINc/VapC protein family. Mg(2+) is required as a cofactor.

Its function is as follows. Toxic component of a possible type II toxin-antitoxin (TA) system. A putative RNase. Its cognate antitoxin is VapB34. This Mycobacterium tuberculosis (strain CDC 1551 / Oshkosh) protein is Putative ribonuclease VapC34 (vapC34).